The chain runs to 204 residues: Protein GrpE (204 aa).

The segment at 1-52 (MSSKNNPESETKAKNKWEKVMEAEEEQEEGGGDGSQEMEPHREGLEFPSREK) is disordered. Basic and acidic residues-rich tracts occupy residues 7 to 22 (PESE…KVME) and 38 to 52 (MEPH…SREK).

Belongs to the GrpE family. Homodimer.

The protein resides in the cytoplasm. Its function is as follows. Participates actively in the response to hyperosmotic and heat shock by preventing the aggregation of stress-denatured proteins, in association with DnaK and GrpE. It is the nucleotide exchange factor for DnaK and may function as a thermosensor. Unfolded proteins bind initially to DnaJ; upon interaction with the DnaJ-bound protein, DnaK hydrolyzes its bound ATP, resulting in the formation of a stable complex. GrpE releases ADP from DnaK; ATP binding to DnaK triggers the release of the substrate protein, thus completing the reaction cycle. Several rounds of ATP-dependent interactions between DnaJ, DnaK and GrpE are required for fully efficient folding. This Coxiella burnetii (strain Dugway 5J108-111) protein is Protein GrpE.